Here is a 440-residue protein sequence, read N- to C-terminus: 2-methylisoborneol synthase (440 aa).

A disordered region spans residues 1-116 (MPDSGPLGPH…SPAPAEPAAG (116 aa)). The segment covering 17–27 (TPATTVPDAPA) has biased composition (low complexity). Residues 48–58 (PPVPIPSPSPP) show a composition bias toward pro residues. The segment covering 59 to 75 (SGSASAAADTPDATTVG) has biased composition (low complexity). Pro residues predominate over residues 102–111 (PSLPGSPAPA). Mg(2+) contacts are provided by Asp197, Asp198, Glu202, Asn345, Ser349, and Glu353.

This sequence belongs to the terpene synthase family. 2-methylisoborneol synthase subfamily. It depends on Mg(2+) as a cofactor.

It catalyses the reaction (E)-2-methylgeranyl diphosphate + H2O = 2-methylisoborneol + diphosphate. In terms of biological role, catalyzes the cyclization of 2-methylgeranyl diphosphate (2-MeGPP) to 2-methylisoborneol (2-MIB), which likely involves the intermediacy of 2-methyllinalyl diphosphate. In Streptomyces ambofaciens (strain ATCC 23877 / 3486 / DSM 40053 / JCM 4204 / NBRC 12836 / NRRL B-2516), this protein is 2-methylisoborneol synthase.